The chain runs to 270 residues: Urease accessory protein UreD (270 aa).

It belongs to the UreD family. In terms of assembly, ureD, UreF and UreG form a complex that acts as a GTP-hydrolysis-dependent molecular chaperone, activating the urease apoprotein by helping to assemble the nickel containing metallocenter of UreC. The UreE protein probably delivers the nickel.

It localises to the cytoplasm. In terms of biological role, required for maturation of urease via the functional incorporation of the urease nickel metallocenter. The sequence is that of Urease accessory protein UreD from Actinobacillus pleuropneumoniae serotype 3 (strain JL03).